The following is a 672-amino-acid chain: Acetoacetyl-CoA synthetase (672 aa).

Belongs to the ATP-dependent AMP-binding enzyme family.

It localises to the cytoplasm. The protein localises to the cytosol. It catalyses the reaction acetoacetate + ATP + CoA = acetoacetyl-CoA + AMP + diphosphate. In terms of biological role, converts acetoacetate to acetoacetyl-CoA in the cytosol. Ketone body-utilizing enzyme, responsible for the synthesis of cholesterol and fatty acids. This is Acetoacetyl-CoA synthetase (Aacs) from Mus musculus (Mouse).